The sequence spans 115 residues: Holo-[acyl-carrier-protein] synthase (115 aa).

Mg(2+) contacts are provided by Asp-8 and Glu-50.

Belongs to the P-Pant transferase superfamily. AcpS family. The cofactor is Mg(2+).

The protein localises to the cytoplasm. The enzyme catalyses apo-[ACP] + CoA = holo-[ACP] + adenosine 3',5'-bisphosphate + H(+). Functionally, transfers the 4'-phosphopantetheine moiety from coenzyme A to a Ser of acyl-carrier-protein. This is Holo-[acyl-carrier-protein] synthase from Arthrobacter sp. (strain FB24).